Here is a 145-residue protein sequence, read N- to C-terminus: D-aminoacyl-tRNA deacylase (145 aa).

A Gly-cisPro motif, important for rejection of L-amino acids motif is present at residues 137-138 (GP).

Belongs to the DTD family. Homodimer.

Its subcellular location is the cytoplasm. It catalyses the reaction glycyl-tRNA(Ala) + H2O = tRNA(Ala) + glycine + H(+). It carries out the reaction a D-aminoacyl-tRNA + H2O = a tRNA + a D-alpha-amino acid + H(+). An aminoacyl-tRNA editing enzyme that deacylates mischarged D-aminoacyl-tRNAs. Also deacylates mischarged glycyl-tRNA(Ala), protecting cells against glycine mischarging by AlaRS. Acts via tRNA-based rather than protein-based catalysis; rejects L-amino acids rather than detecting D-amino acids in the active site. By recycling D-aminoacyl-tRNA to D-amino acids and free tRNA molecules, this enzyme counteracts the toxicity associated with the formation of D-aminoacyl-tRNA entities in vivo and helps enforce protein L-homochirality. The polypeptide is D-aminoacyl-tRNA deacylase (Pseudomonas putida (strain GB-1)).